An 867-amino-acid polypeptide reads, in one-letter code: Glutamate receptor 1.2 (867 aa).

A signal peptide spans 1-27 (MVRICIQTPILLSFLLVLLFFISNCFA). The Extracellular portion of the chain corresponds to 28-560 (SSQNNDDDKR…SMWVFFQPLT (533 aa)). N-linked (GlcNAc...) asparagine glycosylation is found at N301, N400, N496, and N499. A helical membrane pass occupies residues 561–581 (PNLWITSAAFFVLTGIIVWLI). The Cytoplasmic portion of the chain corresponds to 582–590 (ERAENKEFQ). The chain crosses the membrane as a helical span at residues 591–611 (GSWPQQIGVVIWFGFSTLVYA). Over 612 to 622 (HREKLQHNLSR) the chain is Cytoplasmic. The helical transmembrane segment at 623-643 (FVVTVWVFAVLILVTSYTATL) threads the bilayer. Residues 644–792 (TSMMTVQQIR…NPITLYRFRG (149 aa)) are Extracellular-facing. N-linked (GlcNAc...) asparagine glycans are attached at residues N676, N688, N699, and N748. A helical transmembrane segment spans residues 793 to 813 (LFMITGVSFAFALAVLLILWL). Residues 814 to 867 (RERWEILVNSVNIYFSQRLRHFRILFTRTIHPSPLGLDNPIGENAVQMAQRNRR) lie on the Cytoplasmic side of the membrane.

The protein belongs to the glutamate-gated ion channel (TC 1.A.10.1) family. In terms of assembly, may form heteromers. In terms of tissue distribution, expressed predominantly in roots and siliques.

Its subcellular location is the membrane. Its function is as follows. Glutamate-gated receptor that probably acts as a non-selective cation channel. May be involved in light-signal transduction and calcium homeostasis via the regulation of calcium influx into cells. This Arabidopsis thaliana (Mouse-ear cress) protein is Glutamate receptor 1.2 (GLR1.2).